Reading from the N-terminus, the 762-residue chain is 5-methyltetrahydropteroyltriglutamate--homocysteine methyltransferase (762 aa).

Residues 18–21 and lysine 112 each bind 5-methyltetrahydropteroyltri-L-glutamate; that span reads REWK. L-homocysteine-binding positions include 435–437 and glutamate 488; that span reads IGS. L-methionine contacts are provided by residues 435-437 and glutamate 488; that span reads IGS. 5-methyltetrahydropteroyltri-L-glutamate contacts are provided by residues 519-520 and tryptophan 565; that span reads RC. Aspartate 603 is a binding site for L-homocysteine. L-methionine is bound at residue aspartate 603. Glutamate 609 contributes to the 5-methyltetrahydropteroyltri-L-glutamate binding site. 3 residues coordinate Zn(2+): histidine 645, cysteine 647, and glutamate 669. The active-site Proton donor is the histidine 698. The residue at position 719 (cysteine 719) is an S-bacillithiol cysteine disulfide. Residue cysteine 730 participates in Zn(2+) binding.

The protein belongs to the vitamin-B12 independent methionine synthase family. The cofactor is Zn(2+). Post-translationally, in response to oxidative stress, Cys-719 can react with bacillithiol (BSH) to form mixed disulfides. S-bacillithiolation leads to loss of catalytic activity and methionine auxotrophy.

It catalyses the reaction 5-methyltetrahydropteroyltri-L-glutamate + L-homocysteine = tetrahydropteroyltri-L-glutamate + L-methionine. The protein operates within amino-acid biosynthesis; L-methionine biosynthesis via de novo pathway; L-methionine from L-homocysteine (MetE route): step 1/1. In terms of biological role, catalyzes the transfer of a methyl group from 5-methyltetrahydrofolate to homocysteine resulting in methionine formation. The sequence is that of 5-methyltetrahydropteroyltriglutamate--homocysteine methyltransferase from Bacillus subtilis (strain 168).